Reading from the N-terminus, the 347-residue chain is UPF0284 protein YN1551_0030 (347 aa).

The protein belongs to the UPF0284 family.

The polypeptide is UPF0284 protein YN1551_0030 (Saccharolobus islandicus (strain Y.N.15.51 / Yellowstone #2) (Sulfolobus islandicus)).